The sequence spans 615 residues: DNA mismatch repair protein MutL (615 aa).

Over residues 378 to 391 (PAPASGSRPAAPWP) the composition is skewed to low complexity. A disordered region spans residues 378–397 (PAPASGSRPAAPWPNAQPGY).

It belongs to the DNA mismatch repair MutL/HexB family.

Its function is as follows. This protein is involved in the repair of mismatches in DNA. It is required for dam-dependent methyl-directed DNA mismatch repair. May act as a 'molecular matchmaker', a protein that promotes the formation of a stable complex between two or more DNA-binding proteins in an ATP-dependent manner without itself being part of a final effector complex. The polypeptide is DNA mismatch repair protein MutL (Escherichia coli O127:H6 (strain E2348/69 / EPEC)).